Consider the following 122-residue polypeptide: Acidic phospholipase A2 4 (122 aa).

7 disulfides stabilise this stretch: cysteine 26-cysteine 115, cysteine 28-cysteine 44, cysteine 43-cysteine 95, cysteine 49-cysteine 122, cysteine 50-cysteine 88, cysteine 57-cysteine 81, and cysteine 75-cysteine 86. Phenylalanine 27, glycine 29, and glycine 31 together coordinate Ca(2+). The active site involves histidine 47. Aspartate 48 is a binding site for Ca(2+). Residue aspartate 89 is part of the active site.

The protein belongs to the phospholipase A2 family. Group II subfamily. D49 sub-subfamily. Ca(2+) is required as a cofactor. As to expression, expressed by the venom gland.

The protein resides in the secreted. The enzyme catalyses a 1,2-diacyl-sn-glycero-3-phosphocholine + H2O = a 1-acyl-sn-glycero-3-phosphocholine + a fatty acid + H(+). Functionally, snake venom phospholipase A2 (PLA2) that has high lipolytic activity. PLA2 catalyzes the calcium-dependent hydrolysis of the 2-acyl groups in 3-sn-phosphoglycerides. This is Acidic phospholipase A2 4 from Craspedocephalus gramineus (Bamboo pit viper).